The chain runs to 48 residues: uncharacterized protein (48 aa).

Residues 1–48 (MLFCNNNNNNNNNNNNNNNNNNNNNNNNNNNNNNNNNNNSSNNNNFSR) form a disordered region.

This is an uncharacterized protein from Dictyostelium discoideum (Social amoeba).